Consider the following 565-residue polypeptide: Pentatricopeptide repeat-containing protein At3g20730 (565 aa).

PPR repeat units lie at residues S12–S46, N47–R77, D78–A112, N113–G147, N148–R178, D179–P213, D214–R248, S249–R279, D280–M315, D316–F351, D352–K382, D383–P417, N418–K448, and R454–I484. Residues T491–Y565 are type E motif; degenerate.

The protein belongs to the PPR family. PCMP-E subfamily.

This is Pentatricopeptide repeat-containing protein At3g20730 (PCMP-E94) from Arabidopsis thaliana (Mouse-ear cress).